A 324-amino-acid polypeptide reads, in one-letter code: 26S proteasome non-ATPase regulatory subunit 7 (324 aa).

Residues 9–144 (VVVHPLVLLS…TEAYISVEEV (136 aa)) enclose the MPN domain. K180 participates in a covalent cross-link: Glycyl lysine isopeptide (Lys-Gly) (interchain with G-Cter in ubiquitin). N6-acetyllysine occurs at positions 204, 214, 316, and 317. Residues 281 to 324 (ANRDAEKKEGQEKEESKKDRKEDKEKDKDKEKSDVKKEEKKEKK) form a disordered region.

This sequence belongs to the peptidase M67A family. In terms of assembly, component of the 19S proteasome regulatory particle complex. The 26S proteasome consists of a 20S core particle (CP) and two 19S regulatory subunits (RP). The regulatory particle is made of a lid composed of 9 subunits including PSMD7, a base containing 6 ATPases and few additional components. Within the complex, PSMD7 interacts with subunit PSMD4 through their respective MPN domain. Interacts with TRIM5.

Functionally, component of the 26S proteasome, a multiprotein complex involved in the ATP-dependent degradation of ubiquitinated proteins. This complex plays a key role in the maintenance of protein homeostasis by removing misfolded or damaged proteins, which could impair cellular functions, and by removing proteins whose functions are no longer required. Therefore, the proteasome participates in numerous cellular processes, including cell cycle progression, apoptosis, or DNA damage repair. This Homo sapiens (Human) protein is 26S proteasome non-ATPase regulatory subunit 7 (PSMD7).